Reading from the N-terminus, the 490-residue chain is 3-octaprenyl-4-hydroxybenzoate carboxy-lyase (490 aa).

Mn(2+) is bound at residue asparagine 172. Residues 175–177, 189–191, and 194–195 contribute to the prenylated FMN site; these read IYR, RWL, and RG. Residue glutamate 238 participates in Mn(2+) binding. The active-site Proton donor is the aspartate 287.

The protein belongs to the UbiD family. As to quaternary structure, homohexamer. It depends on prenylated FMN as a cofactor. Mn(2+) is required as a cofactor.

It is found in the cell membrane. It carries out the reaction a 4-hydroxy-3-(all-trans-polyprenyl)benzoate + H(+) = a 2-(all-trans-polyprenyl)phenol + CO2. The protein operates within cofactor biosynthesis; ubiquinone biosynthesis. Functionally, catalyzes the decarboxylation of 3-octaprenyl-4-hydroxy benzoate to 2-octaprenylphenol, an intermediate step in ubiquinone biosynthesis. The chain is 3-octaprenyl-4-hydroxybenzoate carboxy-lyase from Saccharophagus degradans (strain 2-40 / ATCC 43961 / DSM 17024).